Consider the following 227-residue polypeptide: Claudin-15 (227 aa).

A topological domain (cytoplasmic) is located at residue M1. The chain crosses the membrane as a helical span at residues 2–24 (SIAVETFGFFMSALGLLMLGVTL). At 25-74 (PNSYWRVSTVHGNVITTNTIFENLWYSCATDSLGVSNCWDFPSMLALSGY) the chain is on the extracellular side. C52 and C62 are oxidised to a cystine. The chain crosses the membrane as a helical span at residues 75–99 (VQGCRALMITAILLGFLGLFLGMVG). Residues 100-115 (LRCTNVGNIDLSRKAK) lie on the Cytoplasmic side of the membrane. The residue at position 111 (S111) is a Phosphoserine. The chain crosses the membrane as a helical span at residues 116–140 (LLAIAGAFHILAGACGMVAISWYAV). At 141-159 (NITTDFFNPLYVGTKYELG) the chain is on the extracellular side. Residues 146-147 (FF) are important for the formation of tight-junction strand-like structures. The helical transmembrane segment at 160 to 182 (SALYLGWSASLLSILGGICVFST) threads the bilayer. Over 183-227 (CCCDSKEDPATRVGLPYKPSTVVTARATSDESDVSFGKYGKNAYV) the chain is Cytoplasmic. S211, S214, and S217 each carry phosphoserine.

It belongs to the claudin family. Can form homo- and heteropolymeric tight junction strands. Palmitoylated. As to expression, detected in kidney, jejunum and colon (at protein level).

It localises to the cell junction. Its subcellular location is the tight junction. It is found in the cell membrane. The catalysed reaction is Na(+)(in) = Na(+)(out). The enzyme catalyses K(+)(in) = K(+)(out). It carries out the reaction Cs(+)(in) = Cs(+)(out). It catalyses the reaction Rb(+)(in) = Rb(+)(out). The catalysed reaction is Li(+)(in) = Li(+)(out). The enzyme catalyses NH4(+)(in) = NH4(+)(out). It carries out the reaction methylamine(out) = methylamine(in). It catalyses the reaction H2O(in) = H2O(out). Its function is as follows. Forms paracellular channels: polymerizes in tight junction strands with cation- and water-selective channels through the strands, conveying epithelial permeability in a process known as paracellular tight junction permeability. In intestinal epithelium, allows for sodium and water fluxes from the peritoneal side to the lumen of the intestine to regulate nutrient absorption and intestinal morphogenesis. In Rattus norvegicus (Rat), this protein is Claudin-15.